A 1008-amino-acid polypeptide reads, in one-letter code: SKI family transcriptional corepressor 2 (1008 aa).

Disordered regions lie at residues H280–D315 and E514–V927. 2 stretches are compositionally biased toward pro residues: residues A284–L294 and A525–V534. 2 stretches are compositionally biased toward low complexity: residues V535–P544 and G578–T595. The segment covering G626 to A635 has biased composition (basic and acidic residues). The span at P649 to P666 shows a compositional bias: basic residues. Pro residues predominate over residues A691–P703. Composition is skewed to acidic residues over residues D724 to D739 and G748 to E766. Residues L787 to T797 show a composition bias toward basic and acidic residues. Low complexity predominate over residues S842–H855. 3 stretches are compositionally biased toward basic and acidic residues: residues P856–E872, T880–K890, and F905–Q915.

It belongs to the SKI family. In terms of assembly, interacts with SMAD2 and SMAD3. As to expression, expression is restricted to adult and embryonic central nervous system. Expressed at high levels in the developing cerebellum, ventral metencephalon and myelencephalon at 12.5 dpc (at protein level). In the adult cerebellum, expressed specifically in Purkinje cells.

Its subcellular location is the nucleus. The protein resides in the cytoplasm. In terms of biological role, acts as a TGF-beta antagonist in the nervous system. Exhibits transcriptional repressor activity. In Mus musculus (Mouse), this protein is SKI family transcriptional corepressor 2.